The following is a 205-amino-acid chain: Shieldin complex subunit 1 (205 aa).

As to quaternary structure, component of the shieldin complex, consisting of SHLD1, SHLD2, SHLD3 and MAD2L2/REV7. Within the complex, SHLD2 forms a scaffold which interacts with a SHLD3-MAD2L2 subcomplex via its N-terminus, and with SHLD1 via its C-terminus. Interacts with ASTE1.

The protein localises to the chromosome. Functionally, component of the shieldin complex, which plays an important role in repair of DNA double-stranded breaks (DSBs). During G1 and S phase of the cell cycle, the complex functions downstream of TP53BP1 to promote non-homologous end joining (NHEJ) and suppress DNA end resection. Mediates various NHEJ-dependent processes including immunoglobulin class-switch recombination, and fusion of unprotected telomeres. This Homo sapiens (Human) protein is Shieldin complex subunit 1.